The primary structure comprises 707 residues: MGERRFSNQQIDRLLRPKSVAVIGASDRKGALGATLLNNLVQYEFSGDIYPVNPKRDELLGLKVYHEVAELPEGIDCAVLAIPRPFVIDTVRQLAQRGCGAVVIYSAGFSEAGEEGMKDQLELAAIAAEYGMVIEGPNCLGCTNYVERVPLTFVETNMQTPPKGTRAVGIASQSGALAAVLATALHPRGLYVSSSVSTGNEAASGVEDYVEWLVDDEDTHVIAMYVESLRRPKAFIAAARRAHAAGKPIVMLHPGKSNKAQESAATHTGAMAGDYALMKTKLAREGVIFADTLEELADITEIALRCRALPGANMAVLGESGALRGLAFDIAEDIGLDLIHLDDDNSPALRAILPDFVPVSNPTDITALGLSEPEIYTKVLTALLEDERIGSVVASIIQSDPITSGIKFPHIIKVLDGGTFAKPLVFAGVDEGATVPKEYIDGLRKVGIPWFPSTERAYRAIARLADLSKRDLADNSGDPIVVPGLDAVSGVVPEYKAKELLRPLGIAFPPSQFAANAEAAAAAARAIGYPVVMKAQAAALGHKSDAGGVILNLKTDDEVRDAFARIYGNVEAYDRSIALDGVLIEKMGKMGTEMIVGAKNDPQWGPVVLAGFGGVTAEILKDVKLFTPEMDAAAVQRGLLELKQAPILKGYRGAPALDVAALAELIVQIGRVMAGNPSIREIDLNPVIIHPAGEGVAALDALMLVER.

Residues histidine 267 and 524-535 each bind ATP; that span reads ARAIGYPVVMKA. The 52-residue stretch at 498–549 folds into the ATP-grasp domain; sequence KELLRPLGIAFPPSQFAANAEAAAAAARAIGYPVVMKAQAAALGHKSDAGGV.

It in the N-terminal section; belongs to the acetate CoA ligase alpha subunit family. The protein in the C-terminal section; belongs to the acetate CoA ligase beta subunit family. Homodimer.

The enzyme catalyses (E)-ferulate + ATP + CoA = (E)-feruloyl-CoA + ADP + phosphate. Its function is as follows. Catalyzes the formation of feruloyl-CoA, ADP and phosphate from ferulate, CoA and ATP. The polypeptide is Trans-feruloyl-CoA synthase FCS1 (Unknown prokaryotic organism).